A 343-amino-acid chain; its full sequence is MLTNRQLLILQVIINDFIKSAQPVGSRTLSKKDEITFSSATIRNEMADLEELGFIEKTHSSSGRVPSEKGYRYYVDHLLSPVKLTKSDLDQIHSIFKEKIFELEKTVQKSAQILSDLTNYTSIVLGPKLSENYLKQIQIIPIQPDMAVAILVTNTGHVENKTINFPTKMDLSDIEKLVNILNDRLSGVPMDELNERIFKEVVMYLRQHIKNYDNILDALRSTFHSTNHVEKLFFGGKINMLNQPEFHDITRVRSLLSLIEKEQDVLKLVQSPHTGISIKIGKENDYEEMENCSLITASYSVDQKQIGSIAIIGPTRMNYSRVVSLLQHVTSDLSKALTSLYDE.

It belongs to the HrcA family.

In terms of biological role, negative regulator of class I heat shock genes (grpE-dnaK-dnaJ and groELS operons). Prevents heat-shock induction of these operons. The polypeptide is Heat-inducible transcription repressor HrcA (Bacillus subtilis (strain 168)).